A 254-amino-acid polypeptide reads, in one-letter code: Splicing factor tls1 (254 aa).

Over residues 69-83 the composition is skewed to basic and acidic residues; the sequence is KEKQLNTANEPHEAN. Disordered stretches follow at residues 69 to 90 and 195 to 216; these read KEKQLNTANEPHEANDQTSAQS and RKRQKKRARMKEKLDSKALRTS. The segment covering 195 to 204 has biased composition (basic residues); the sequence is RKRQKKRARM. Residues 205-216 are compositionally biased toward basic and acidic residues; sequence KEKLDSKALRTS.

It belongs to the TLS1 family. In terms of assembly, component of the spliceosome. Interacts with brr2.

The protein localises to the cytoplasm. It localises to the nucleus. Plays a role in pre-mRNA splicing by facilitating excision of introns featuring long spacing between the branchpoint and 3'-splice site. Assists the splicing of several components involved in chromatin organization, such as several shelterin complex subunits. The polypeptide is Splicing factor tls1 (Schizosaccharomyces pombe (strain 972 / ATCC 24843) (Fission yeast)).